The chain runs to 172 residues: Capsid protein (172 aa).

A disordered region spans residues M1 to S26. A compositionally biased stretch (basic residues) spans K11 to Y20.

It belongs to the nanoviridae capsid protein family.

The protein resides in the virion. This Faba bean necrotic yellows virus (isolate Egyptian EV1-93) (FBNYV) protein is Capsid protein (DNA-S).